The sequence spans 132 residues: Histone H2A.1 (132 aa).

It belongs to the histone H2A family. The nucleosome is a histone octamer containing two molecules each of H2A, H2B, H3 and H4 assembled in one H3-H4 heterotetramer and two H2A-H2B heterodimers. The octamer wraps approximately 147 bp of DNA.

Its subcellular location is the nucleus. It is found in the chromosome. Core component of nucleosome. Nucleosomes wrap and compact DNA into chromatin, limiting DNA accessibility to the cellular machineries which require DNA as a template. Histones thereby play a central role in transcription regulation, DNA repair, DNA replication and chromosomal stability. DNA accessibility is regulated via a complex set of post-translational modifications of histones, also called histone code, and nucleosome remodeling. The polypeptide is Histone H2A.1 (Leishmania infantum).